Here is a 977-residue protein sequence, read N- to C-terminus: MAQFYYKRNVNAPYRDRIPLRIVRAESELSPSEKAYLNAVEKGDYASVKKSLEEAEIYFKININCIDPLGRTALLIAIENENLELIELLLSFNVYVGDALLHAIRKEVVGAVELLLNHKKPSGEKQVPPILLDKQFSEFTPDITPIILAAHTNNYEIIKLLVQKGVSVPRPHEVRCNCVECVSSSDVDSLRHSRSRLNIYKALASPSLIALSSEDPFLTAFQLSWELQELSKVENEFKSEYEELSRQCKQFAKDLLDQTRSSRELEIILNYRDDNSLIEEQSGNDLARLKLAIKYRQKEFVAQPNCQQLLASRWYDEFPGWRRRHWAVKMVTCFIIGLLFPVFSVCYLIAPKSPLGLFIRKPFIKFICHTASYLTFLFLLLLASQHIDRSDLNRQGPPPTIVEWMILPWVLGFIWGEIKQMWDGGLQDYIHDWWNLMDFVMNSLYLATISLKIVAFVKYSALNPRESWDMWHPTLVAEALFAIANIFSSLRLISLFTANSHLGPLQISLGRMLLDILKFLFIYCLVLLAFANGLNQLYFYYEETKGLSCKGIRCEKQNNAFSTLFETLQSLFWSIFGLINLYVTNVKAQHEFTDFVGATMFGTYNVISLVVLLNMLIAMMNNSYQLIADHADIEWKFARTKLWMSYFEEGGTLPTPFNVIPSPKSLWYLVKWIWTHLCKKKMRRKPESFGTIGRRAADNLRRHHQYQEVMRNLVKRYVAAMIREAKTEEGLTEENVKELKQDISSFRFEVLGLLRGSKLSTIQSANAASSASSADSDEKSHSEGNGKDKRKNLSLFDLTTLIHPRSAVIASERHNLSNGSALVVQEPPREKQRKVNFVADIKNFGLFHRRSKQNAAEQNANQIFSVSEEITRQQAAGALERNIQLESKGLASRGDRSIPGLNEQCVLVDHRERNTDTLGLQVGKRVCSSFKSEKVVVEDTVPIIPKEKHAQEEDSSIDYDLSPTDTVAHEDYVTTRL.

The Cytoplasmic portion of the chain corresponds to 1-324 (MAQFYYKRNV…YDEFPGWRRR (324 aa)). ANK repeat units follow at residues 29–60 (LSPSEKAYLNAVEKGDYASVKKSLEEAEIYFK), 71–93 (RTALLIAIENENLELIELLLSFN), 96–118 (VGDALLHAIRKEVVGAVELLLNH), and 141–165 (PDITPIILAAHTNNYEIIKLLVQKG). Histidine 172, cysteine 176, cysteine 178, and cysteine 181 together coordinate Zn(2+). Residues 223 to 260 (LSWELQELSKVENEFKSEYEELSRQCKQFAKDLLDQTR) adopt a coiled-coil conformation. Positions 325 to 359 (HWAVKMVTCFIIGLLFPVFSVCYLIAPKSPLGLFI) form an intramembrane region, discontinuously helical. At 360–362 (RKP) the chain is on the cytoplasmic side. The chain crosses the membrane as a helical span at residues 363 to 383 (FIKFICHTASYLTFLFLLLLA). The Extracellular segment spans residues 384–403 (SQHIDRSDLNRQGPPPTIVE). The helical transmembrane segment at 404–418 (WMILPWVLGFIWGEI) threads the bilayer. Glutamate 417, glutamine 420, asparagine 435, and aspartate 438 together coordinate Ca(2+). At 419-432 (KQMWDGGLQDYIHD) the chain is on the cytoplasmic side. Residues 433–453 (WWNLMDFVMNSLYLATISLKI) traverse the membrane as a helical segment. Over 454–475 (VAFVKYSALNPRESWDMWHPTL) the chain is Extracellular. Residues 476 to 498 (VAEALFAIANIFSSLRLISLFTA) traverse the membrane as a helical segment. Residues 499 to 511 (NSHLGPLQISLGR) lie on the Cytoplasmic side of the membrane. A helical transmembrane segment spans residues 512-534 (MLLDILKFLFIYCLVLLAFANGL). Over 535–599 (NQLYFYYEET…HEFTDFVGAT (65 aa)) the chain is Extracellular. Residues cysteine 549 and cysteine 554 are joined by a disulfide bond. The helical transmembrane segment at 600–620 (MFGTYNVISLVVLLNMLIAMM) threads the bilayer. The tract at residues 615–977 (MLIAMMNNSY…AHEDYVTTRL (363 aa)) is interaction with ITPR1, ITPR2 and ITPR3. The Cytoplasmic segment spans residues 621–977 (NNSYQLIADH…AHEDYVTTRL (357 aa)). The segment at 767–790 (AASSASSADSDEKSHSEGNGKDKR) is disordered. Residues 776–787 (SDEKSHSEGNGK) show a composition bias toward basic and acidic residues. A phosphotyrosine; by FYN mark is found at tyrosine 959 and tyrosine 972. The PDZ-binding domain stretch occupies residues 975–977 (TRL).

This sequence belongs to the transient receptor (TC 1.A.4) family. STrpC subfamily. TRPC4 sub-subfamily. Homotetramer. Heterotetramer with TRPC1 and/or TRPC5. Forms a heteromeric ion channel with TRPC1, with a 1:3 TRPC1:TRPC4 stoichiometry. Interacts with TRPC4AP. Isoform alpha but not isoform beta interacts with ITPR1, ITPR2 and ITPR3. Interacts with NHERF1. Interacts with MX1 and RNF24. Interacts (via CIRB domain) with SESTD1 (via the spectrin 1 repeat) and SPTBN5 (via C-terminus). Interacts with CDH5 and CTNNB1. Interacts (via protein 4.1-binding domain) with EPB41L2. Interacts with PLSCR1.

Its subcellular location is the cell membrane. It catalyses the reaction Ca(2+)(in) = Ca(2+)(out). The catalysed reaction is Na(+)(in) = Na(+)(out). The enzyme catalyses Li(+)(in) = Li(+)(out). It carries out the reaction Cs(+)(in) = Cs(+)(out). With respect to regulation, may be operated by a phosphatidylinositol second messenger system activated by receptor tyrosine kinases or G-protein coupled receptors. May be activated by intracellular calcium store depletion. Functionally, forms a receptor-activated non-selective calcium permeant cation channel. Acts as a cell-cell contact-dependent endothelial calcium entry channel. Forms a homomeric ion channel or a heteromeric ion channel with TRPC1; the heteromeric ion channel has reduced calcium permeability compared to the homomeric channel. Also permeable to monovalent ions including sodium, lithium and cesium ions. In terms of biological role, forms a non-selective a receptor-activated calcium permeant cation channel. Probably is operated by a phosphatidylinositol second messenger system activated by receptor tyrosine kinases or G-protein coupled receptors. This is Short transient receptor potential channel 4 (Trpc4) from Rattus norvegicus (Rat).